We begin with the raw amino-acid sequence, 70 residues long: Small ribosomal subunit protein bS21 (70 aa).

Belongs to the bacterial ribosomal protein bS21 family.

In Nautilia profundicola (strain ATCC BAA-1463 / DSM 18972 / AmH), this protein is Small ribosomal subunit protein bS21.